A 144-amino-acid chain; its full sequence is Large ribosomal subunit protein uL24 (144 aa).

The segment at 102–144 (NIVVEKPEPEPEPRKEETAEAQEAKEEAVAEEKTEVDDNDKQN) is disordered. The span at 103 to 134 (IVVEKPEPEPEPRKEETAEAQEAKEEAVAEEK) shows a compositional bias: basic and acidic residues. Acidic residues predominate over residues 135 to 144 (TEVDDNDKQN).

This sequence belongs to the universal ribosomal protein uL24 family. In terms of assembly, part of the 50S ribosomal subunit.

In terms of biological role, one of two assembly initiator proteins, it binds directly to the 5'-end of the 23S rRNA, where it nucleates assembly of the 50S subunit. Its function is as follows. Located at the polypeptide exit tunnel on the outside of the subunit. This Thermoplasma acidophilum (strain ATCC 25905 / DSM 1728 / JCM 9062 / NBRC 15155 / AMRC-C165) protein is Large ribosomal subunit protein uL24 (rpl24).